The primary structure comprises 205 residues: Holliday junction branch migration complex subunit RuvA (205 aa).

Residues 1 to 64 form a domain I region; the sequence is MIGRLRGTLA…EDAHLLYGFA (64 aa). Residues 65–143 are domain II; the sequence is EKRERELFRE…AWETSPAMFT (79 aa). The flexible linker stretch occupies residues 144–154; it reads LVSDGPLPVAS. Positions 154–205 are domain III; sequence SESSAEADAVSALVSLGYKPQEASKAIAAIKDKAGLSSEELIRRSLKGMISK.

The protein belongs to the RuvA family. Homotetramer. Forms an RuvA(8)-RuvB(12)-Holliday junction (HJ) complex. HJ DNA is sandwiched between 2 RuvA tetramers; dsDNA enters through RuvA and exits via RuvB. An RuvB hexamer assembles on each DNA strand where it exits the tetramer. Each RuvB hexamer is contacted by two RuvA subunits (via domain III) on 2 adjacent RuvB subunits; this complex drives branch migration. In the full resolvosome a probable DNA-RuvA(4)-RuvB(12)-RuvC(2) complex forms which resolves the HJ.

Its subcellular location is the cytoplasm. Its function is as follows. The RuvA-RuvB-RuvC complex processes Holliday junction (HJ) DNA during genetic recombination and DNA repair, while the RuvA-RuvB complex plays an important role in the rescue of blocked DNA replication forks via replication fork reversal (RFR). RuvA specifically binds to HJ cruciform DNA, conferring on it an open structure. The RuvB hexamer acts as an ATP-dependent pump, pulling dsDNA into and through the RuvAB complex. HJ branch migration allows RuvC to scan DNA until it finds its consensus sequence, where it cleaves and resolves the cruciform DNA. This Pseudomonas putida (strain ATCC 47054 / DSM 6125 / CFBP 8728 / NCIMB 11950 / KT2440) protein is Holliday junction branch migration complex subunit RuvA.